The following is a 357-amino-acid chain: Peptide chain release factor 1 (357 aa).

Gln-232 is subject to N5-methylglutamine.

It belongs to the prokaryotic/mitochondrial release factor family. Post-translationally, methylated by PrmC. Methylation increases the termination efficiency of RF1.

The protein resides in the cytoplasm. Peptide chain release factor 1 directs the termination of translation in response to the peptide chain termination codons UAG and UAA. The polypeptide is Peptide chain release factor 1 (Maridesulfovibrio salexigens (strain ATCC 14822 / DSM 2638 / NCIMB 8403 / VKM B-1763) (Desulfovibrio salexigens)).